The sequence spans 333 residues: 5-formaminoimidazole-4-carboxamide-1-(beta)-D-ribofuranosyl 5'-monophosphate synthetase (333 aa).

His10 and Ser70 together coordinate 5-amino-1-(5-phospho-beta-D-ribosyl)imidazole-4-carboxamide. An ATP-grasp domain is found at 91 to 324; it reads KEVLKWESDR…IAREIKIAIE (234 aa). ATP contacts are provided by residues 121-181 and Glu203; that span reads PDDI…VPIY. Asn231 is a binding site for 5-amino-1-(5-phospho-beta-D-ribosyl)imidazole-4-carboxamide. Residues Glu269 and Glu282 each contribute to the Mg(2+) site.

The protein belongs to the phosphohexose mutase family. Requires Mg(2+) as cofactor. Mn(2+) serves as cofactor.

The catalysed reaction is 5-amino-1-(5-phospho-beta-D-ribosyl)imidazole-4-carboxamide + formate + ATP = 5-formamido-1-(5-phospho-D-ribosyl)imidazole-4-carboxamide + ADP + phosphate. The protein operates within purine metabolism; IMP biosynthesis via de novo pathway; 5-formamido-1-(5-phospho-D-ribosyl)imidazole-4-carboxamide from 5-amino-1-(5-phospho-D-ribosyl)imidazole-4-carboxamide (formate route): step 1/1. In terms of biological role, catalyzes the ATP- and formate-dependent formylation of 5-aminoimidazole-4-carboxamide-1-beta-d-ribofuranosyl 5'-monophosphate (AICAR) to 5-formaminoimidazole-4-carboxamide-1-beta-d-ribofuranosyl 5'-monophosphate (FAICAR) in the absence of folates. The polypeptide is 5-formaminoimidazole-4-carboxamide-1-(beta)-D-ribofuranosyl 5'-monophosphate synthetase (Pyrococcus horikoshii (strain ATCC 700860 / DSM 12428 / JCM 9974 / NBRC 100139 / OT-3)).